Reading from the N-terminus, the 890-residue chain is Leucine--tRNA ligase (890 aa).

Residues Pro48 to His58 carry the 'HIGH' region motif. A 'KMSKS' region motif is present at residues Lys645 to Ser649. Lys648 contacts ATP.

It belongs to the class-I aminoacyl-tRNA synthetase family.

It localises to the cytoplasm. It carries out the reaction tRNA(Leu) + L-leucine + ATP = L-leucyl-tRNA(Leu) + AMP + diphosphate. This is Leucine--tRNA ligase from Polynucleobacter asymbioticus (strain DSM 18221 / CIP 109841 / QLW-P1DMWA-1) (Polynucleobacter necessarius subsp. asymbioticus).